The following is a 154-amino-acid chain: Transcriptional repressor NrdR (154 aa).

The segment at 3–34 is a zinc-finger region; sequence CPFCSAHDTKVIDSRLVAEGDQVRRRRECQAC. An ATP-cone domain is found at 49–139; that stretch reads PRVIKQDGSR…VYRRFQDLNE (91 aa).

The protein belongs to the NrdR family. The cofactor is Zn(2+).

In terms of biological role, negatively regulates transcription of bacterial ribonucleotide reductase nrd genes and operons by binding to NrdR-boxes. The protein is Transcriptional repressor NrdR of Azotobacter vinelandii (strain DJ / ATCC BAA-1303).